Here is a 440-residue protein sequence, read N- to C-terminus: Transposon Ty1-GR1 Gag polyprotein (440 aa).

Residues Met1–Ser16 are compositionally biased toward low complexity. Disordered regions lie at residues Met1–Gln93, Pro126–Pro173, and Gly352–Tyr440. Polar residues-rich tracts occupy residues Thr48 to Ser60, Ser71 to Gln93, and Gln127 to Phe152. Over residues Thr153–Thr165 the composition is skewed to low complexity. Residues Asn299 to His401 form an RNA-binding region. The segment covering Asn402–Ser418 has biased composition (low complexity). The residue at position 416 (Ser416) is a Phosphoserine. The segment covering Lys419–Asn428 has biased composition (polar residues). Residues Asn429–Tyr440 are compositionally biased toward basic and acidic residues.

Homotrimer.

It localises to the cytoplasm. Capsid protein (CA) is the structural component of the virus-like particle (VLP), forming the shell that encapsulates the retrotransposons dimeric RNA genome. The particles are assembled from trimer-clustered units and there are holes in the capsid shells that allow for the diffusion of macromolecules. CA also has nucleocapsid-like chaperone activity, promoting primer tRNA(i)-Met annealing to the multipartite primer-binding site (PBS), dimerization of Ty1 RNA and initiation of reverse transcription. The sequence is that of Transposon Ty1-GR1 Gag polyprotein (TY1A-GR1) from Saccharomyces cerevisiae (strain ATCC 204508 / S288c) (Baker's yeast).